A 217-amino-acid chain; its full sequence is Protein-L-isoaspartate O-methyltransferase (217 aa).

S61 is a catalytic residue.

The protein belongs to the methyltransferase superfamily. L-isoaspartyl/D-aspartyl protein methyltransferase family.

It is found in the cytoplasm. It catalyses the reaction [protein]-L-isoaspartate + S-adenosyl-L-methionine = [protein]-L-isoaspartate alpha-methyl ester + S-adenosyl-L-homocysteine. Catalyzes the methyl esterification of L-isoaspartyl residues in peptides and proteins that result from spontaneous decomposition of normal L-aspartyl and L-asparaginyl residues. It plays a role in the repair and/or degradation of damaged proteins. This Syntrophotalea carbinolica (strain DSM 2380 / NBRC 103641 / GraBd1) (Pelobacter carbinolicus) protein is Protein-L-isoaspartate O-methyltransferase.